A 299-amino-acid chain; its full sequence is Nucleotide-binding protein RER_30260 (299 aa).

Residue 19-26 (GLSGAGLS) coordinates ATP. 70–73 (DVRS) is a binding site for GTP.

The protein belongs to the RapZ-like family.

Displays ATPase and GTPase activities. The protein is Nucleotide-binding protein RER_30260 of Rhodococcus erythropolis (strain PR4 / NBRC 100887).